Here is a 34-residue protein sequence, read N- to C-terminus: Photosystem II reaction center protein T (34 aa).

A helical transmembrane segment spans residues 3–23 (ALVYTFLLVSTLGIIFFAIFF).

It belongs to the PsbT family. PSII is composed of 1 copy each of membrane proteins PsbA, PsbB, PsbC, PsbD, PsbE, PsbF, PsbH, PsbI, PsbJ, PsbK, PsbL, PsbM, PsbT, PsbY, PsbZ, Psb30/Ycf12, at least 3 peripheral proteins of the oxygen-evolving complex and a large number of cofactors. It forms dimeric complexes.

It localises to the plastid. The protein localises to the chloroplast thylakoid membrane. Functionally, found at the monomer-monomer interface of the photosystem II (PS II) dimer, plays a role in assembly and dimerization of PSII. PSII is a light-driven water plastoquinone oxidoreductase, using light energy to abstract electrons from H(2)O, generating a proton gradient subsequently used for ATP formation. The chain is Photosystem II reaction center protein T from Atropa belladonna (Belladonna).